We begin with the raw amino-acid sequence, 471 residues long: ATP synthase subunit beta (471 aa).

156 to 163 (GGAGVGKT) provides a ligand contact to ATP.

It belongs to the ATPase alpha/beta chains family. In terms of assembly, F-type ATPases have 2 components, CF(1) - the catalytic core - and CF(0) - the membrane proton channel. CF(1) has five subunits: alpha(3), beta(3), gamma(1), delta(1), epsilon(1). CF(0) has three main subunits: a(1), b(2) and c(9-12). The alpha and beta chains form an alternating ring which encloses part of the gamma chain. CF(1) is attached to CF(0) by a central stalk formed by the gamma and epsilon chains, while a peripheral stalk is formed by the delta and b chains.

The protein localises to the cell inner membrane. The catalysed reaction is ATP + H2O + 4 H(+)(in) = ADP + phosphate + 5 H(+)(out). Its function is as follows. Produces ATP from ADP in the presence of a proton gradient across the membrane. The catalytic sites are hosted primarily by the beta subunits. The chain is ATP synthase subunit beta from Nitratidesulfovibrio vulgaris (strain DSM 19637 / Miyazaki F) (Desulfovibrio vulgaris).